We begin with the raw amino-acid sequence, 325 residues long: Acetyl-coenzyme A carboxylase carboxyl transferase subunit alpha (325 aa).

The CoA carboxyltransferase C-terminal domain occupies Glu-35–Gln-292.

This sequence belongs to the AccA family. Acetyl-CoA carboxylase is a heterohexamer composed of biotin carboxyl carrier protein (AccB), biotin carboxylase (AccC) and two subunits each of ACCase subunit alpha (AccA) and ACCase subunit beta (AccD).

Its subcellular location is the cytoplasm. The enzyme catalyses N(6)-carboxybiotinyl-L-lysyl-[protein] + acetyl-CoA = N(6)-biotinyl-L-lysyl-[protein] + malonyl-CoA. The protein operates within lipid metabolism; malonyl-CoA biosynthesis; malonyl-CoA from acetyl-CoA: step 1/1. In terms of biological role, component of the acetyl coenzyme A carboxylase (ACC) complex. First, biotin carboxylase catalyzes the carboxylation of biotin on its carrier protein (BCCP) and then the CO(2) group is transferred by the carboxyltransferase to acetyl-CoA to form malonyl-CoA. In Geobacillus sp. (strain WCH70), this protein is Acetyl-coenzyme A carboxylase carboxyl transferase subunit alpha.